The chain runs to 155 residues: Gene 5 protein (155 aa).

Residues 1–24 (MGTRGPIGKRDEERVRRNTPENPT) are disordered. The segment covering 8–19 (GKRDEERVRRNT) has biased composition (basic and acidic residues).

The polypeptide is Gene 5 protein (5) (Mycobacterium (Mycobacteriophage D29)).